The following is a 211-amino-acid chain: 2,3-bisphosphoglycerate-dependent phosphoglycerate mutase (211 aa).

Substrate-binding positions include 9-16, 22-23, Arg61, 88-91, Lys99, 115-116, and 159-160; these read RHGQSDWN, TG, ERDY, RR, and GN. His10 acts as the Tele-phosphohistidine intermediate in catalysis. Residue Glu88 is the Proton donor/acceptor of the active site.

It belongs to the phosphoglycerate mutase family. BPG-dependent PGAM subfamily. As to quaternary structure, homodimer.

The enzyme catalyses (2R)-2-phosphoglycerate = (2R)-3-phosphoglycerate. The protein operates within carbohydrate degradation; glycolysis; pyruvate from D-glyceraldehyde 3-phosphate: step 3/5. Catalyzes the interconversion of 2-phosphoglycerate and 3-phosphoglycerate. This is 2,3-bisphosphoglycerate-dependent phosphoglycerate mutase from Rhizobium rhizogenes (strain K84 / ATCC BAA-868) (Agrobacterium radiobacter).